Here is a 290-residue protein sequence, read N- to C-terminus: ATP synthase gamma chain (290 aa).

This sequence belongs to the ATPase gamma chain family. In terms of assembly, F-type ATPases have 2 components, CF(1) - the catalytic core - and CF(0) - the membrane proton channel. CF(1) has five subunits: alpha(3), beta(3), gamma(1), delta(1), epsilon(1). CF(0) has three main subunits: a, b and c.

It localises to the cell membrane. In terms of biological role, produces ATP from ADP in the presence of a proton gradient across the membrane. The gamma chain is believed to be important in regulating ATPase activity and the flow of protons through the CF(0) complex. This chain is ATP synthase gamma chain, found in Roseiflexus sp. (strain RS-1).